The primary structure comprises 309 residues: General transcription factor IIH subunit 3 (309 aa).

The C4-type zinc finger occupies 269–286 (CSVCLSIFCNFSPICTTC).

It belongs to the TFB4 family. In terms of assembly, part of a TFIID-containing RNA polymerase II pre-initiation complex that is composed of TBP and at least GTF2A1, GTF2A2, GTF2E1, GTF2E2, GTF2F1, GTF2H2, GTF2H3, GTF2H4, GTF2H5, GTF2B, TCEA1, ERCC2, ERCC3, TAF1, TAF2, TAF3, TAF4, TAF5, TAF6, TAF7, TAF8, TAF9, TAF10, TAF11, TAF12 and TAF13. Component of the 7-subunit TFIIH core complex composed of XPB/ERCC3, XPD/ERCC2, GTF2H1, GTF2H2, GTF2H3, GTF2H4 and GTF2H5, which is active in NER. The core complex associates with the 3-subunit CDK-activating kinase (CAK) module composed of CCNH/cyclin H, CDK7 and MNAT1 to form the 10-subunit holoenzyme (holo-TFIIH) active in transcription. Interacts with RARA; the interaction requires prior phosphorylation of RARA on 'Ser-369' which then enhances interaction of RARA with CDK7.

It localises to the nucleus. In terms of biological role, component of the general transcription and DNA repair factor IIH (TFIIH) core complex, which is involved in general and transcription-coupled nucleotide excision repair (NER) of damaged DNA and, when complexed to CAK, in RNA transcription by RNA polymerase II. In NER, TFIIH acts by opening DNA around the lesion to allow the excision of the damaged oligonucleotide and its replacement by a new DNA fragment. In transcription, TFIIH has an essential role in transcription initiation. When the pre-initiation complex (PIC) has been established, TFIIH is required for promoter opening and promoter escape. Phosphorylation of the C-terminal tail (CTD) of the largest subunit of RNA polymerase II by the kinase module CAK controls the initiation of transcription. The sequence is that of General transcription factor IIH subunit 3 (GTF2H3) from Bos taurus (Bovine).